A 466-amino-acid polypeptide reads, in one-letter code: Cysteine--tRNA ligase (466 aa).

Cysteine 28 contacts Zn(2+). The short motif at 30–40 (PTVYNYIHIGN) is the 'HIGH' region element. Zn(2+)-binding residues include cysteine 208, histidine 233, and glutamate 237. A 'KMSKS' region motif is present at residues 265–269 (KMSKS). Lysine 268 is an ATP binding site.

Belongs to the class-I aminoacyl-tRNA synthetase family. Monomer. It depends on Zn(2+) as a cofactor.

The protein resides in the cytoplasm. It carries out the reaction tRNA(Cys) + L-cysteine + ATP = L-cysteinyl-tRNA(Cys) + AMP + diphosphate. The polypeptide is Cysteine--tRNA ligase (Staphylococcus aureus (strain USA300)).